The following is a 149-amino-acid chain: UPF0102 protein Bpro_0391 (149 aa).

The disordered stretch occupies residues 1–30; the sequence is MWFSRKQVVKPPPDGSRAQPGQVTTKSRGD.

This sequence belongs to the UPF0102 family.

The sequence is that of UPF0102 protein Bpro_0391 from Polaromonas sp. (strain JS666 / ATCC BAA-500).